A 460-amino-acid polypeptide reads, in one-letter code: G-protein coupled receptor 22 (460 aa).

At 1–74 (MESMPSSLTH…YPVSFQVSLT (74 aa)) the chain is on the cytoplasmic side. The helical transmembrane segment at 75–95 (GFLMLEIVLGLSSNLTVLALY) threads the bilayer. Residues 96–114 (CMKSNLVSSVSNIVTMNLH) are Extracellular-facing. A helical transmembrane segment spans residues 115–135 (VLDVLVCVGCIPLTIVVVLLP). The Cytoplasmic portion of the chain corresponds to 136–144 (LEGNNALIC). A helical membrane pass occupies residues 145–165 (CFHEACVSFASVATAANVLAI). Over 166 to 185 (TLDRYDISVRPANRVLTMGR) the chain is Extracellular. Residues 186–206 (AVALLGSIWALSFFSFLVPFI) traverse the membrane as a helical segment. Over 207–235 (EEGFFSQAGNERNQTEAEEPSNEYYTELG) the chain is Cytoplasmic. A helical membrane pass occupies residues 236–256 (LYYHLLAQIPIFFFTAVVMLV). At 257–343 (TYYKILQALN…ERQKRVFRMS (87 aa)) the chain is on the extracellular side. Residues 276-286 (VPKKKPRKKKT) are compositionally biased toward basic residues. The disordered stretch occupies residues 276–309 (VPKKKPRKKKTISMTSTQPESTDASQSSAGRNAP). Positions 287–305 (ISMTSTQPESTDASQSSAG) are enriched in polar residues. A helical transmembrane segment spans residues 344–364 (LLIISTFLLCWTPITVLNTVI). The Cytoplasmic portion of the chain corresponds to 365–377 (LSVGPSNFTVRLR). The chain crosses the membrane as a helical span at residues 378 to 398 (LGFLVMAYGTTIFHPLLYAFT). The Extracellular portion of the chain corresponds to 399–460 (RQKFQKVLKS…QKCLSSEDVE (62 aa)).

This sequence belongs to the G-protein coupled receptor 1 family.

The protein resides in the cell membrane. Orphan G-protein coupled receptor that regulates cilia length and structure in the Kupffer's vesicle leading to the left-right asymmetry development by establishing a directional fluid flow. The chain is G-protein coupled receptor 22 (gpr22a) from Danio rerio (Zebrafish).